A 187-amino-acid chain; its full sequence is Phosphatidylethanolamine-binding protein 2 (187 aa).

Serine 13, serine 52, and serine 54 each carry phosphoserine.

The protein belongs to the phosphatidylethanolamine-binding protein family. As to expression, testis specific.

The protein localises to the cytoplasm. Its function is as follows. May bind to phospholipids. May act as serine protease inhibitor. The chain is Phosphatidylethanolamine-binding protein 2 (Pbp2) from Mus musculus (Mouse).